The primary structure comprises 84 residues: Cell division topological specificity factor (84 aa).

This sequence belongs to the MinE family.

Prevents the cell division inhibition by proteins MinC and MinD at internal division sites while permitting inhibition at polar sites. This ensures cell division at the proper site by restricting the formation of a division septum at the midpoint of the long axis of the cell. This is Cell division topological specificity factor from Paraburkholderia xenovorans (strain LB400).